We begin with the raw amino-acid sequence, 476 residues long: NADH-quinone oxidoreductase subunit N (476 aa).

14 helical membrane passes run Ile8–Val28, Gly35–Trp55, Tyr71–Phe91, Phe102–Gly122, Phe124–Phe144, Ile159–Ala179, Leu201–Phe221, Phe239–Gly259, Trp267–Ile287, Met295–Thr315, Val322–Ile342, Ala366–Val386, Leu405–Phe425, and Val437–Ile457.

This sequence belongs to the complex I subunit 2 family. NDH-1 is composed of 14 different subunits. Subunits NuoA, H, J, K, L, M, N constitute the membrane sector of the complex.

The protein localises to the cell membrane. The enzyme catalyses a quinone + NADH + 5 H(+)(in) = a quinol + NAD(+) + 4 H(+)(out). NDH-1 shuttles electrons from NADH, via FMN and iron-sulfur (Fe-S) centers, to quinones in the respiratory chain. The immediate electron acceptor for the enzyme in this species is believed to be a menaquinone. Couples the redox reaction to proton translocation (for every two electrons transferred, four hydrogen ions are translocated across the cytoplasmic membrane), and thus conserves the redox energy in a proton gradient. In Desulforamulus reducens (strain ATCC BAA-1160 / DSM 100696 / MI-1) (Desulfotomaculum reducens), this protein is NADH-quinone oxidoreductase subunit N.